Here is a 428-residue protein sequence, read N- to C-terminus: Adenylosuccinate synthetase (428 aa).

Residues 12–18 (GDEGKGK) and 40–42 (GHT) contribute to the GTP site. Residue Asp-13 is the Proton acceptor of the active site. Positions 13 and 40 each coordinate Mg(2+). IMP is bound by residues 13 to 16 (DEGK), 38 to 41 (NAGH), Thr-130, Arg-144, Gln-225, Thr-240, and Arg-304. The active-site Proton donor is His-41. Residue 300 to 306 (VNTGRSR) coordinates substrate. GTP is bound by residues Arg-306, 332-334 (KID), and 414-416 (GVG).

This sequence belongs to the adenylosuccinate synthetase family. In terms of assembly, homodimer. It depends on Mg(2+) as a cofactor.

It is found in the cytoplasm. It carries out the reaction IMP + L-aspartate + GTP = N(6)-(1,2-dicarboxyethyl)-AMP + GDP + phosphate + 2 H(+). Its pathway is purine metabolism; AMP biosynthesis via de novo pathway; AMP from IMP: step 1/2. In terms of biological role, plays an important role in the de novo pathway of purine nucleotide biosynthesis. Catalyzes the first committed step in the biosynthesis of AMP from IMP. This is Adenylosuccinate synthetase from Clostridium beijerinckii (strain ATCC 51743 / NCIMB 8052) (Clostridium acetobutylicum).